A 74-amino-acid chain; its full sequence is Antimicrobial peptide HsAp2 (74 aa).

An N-terminal signal peptide occupies residues 1–21; that stretch reads MSRRLILILVLVAMLVKTMAG. Residues 22–33 constitute a propeptide that is removed on maturation; it reads MESKWVETTYEI. The residue at position 65 (Pro-65) is a Proline amide. Residues 69–74 constitute a propeptide that is removed on maturation; the sequence is AISEQT.

It belongs to the non-disulfide-bridged peptide (NDBP) superfamily. Medium-length antimicrobial peptide (group 3) family. Expressed by the venom gland.

The protein localises to the secreted. It localises to the target cell membrane. In terms of biological role, possesses antimicrobial activity against both Gram-negative and Gram-positive bacteria, as well as against the fungus C.tropicalis. Also possesses a relatively high hemolytic activity. May act by disrupting the integrity of the bacterial cell membrane. The chain is Antimicrobial peptide HsAp2 from Heterometrus spinifer (Asia giant forest scorpion).